We begin with the raw amino-acid sequence, 194 residues long: ATP-dependent Clp protease proteolytic subunit (194 aa).

The active-site Nucleophile is Ser98. His123 is an active-site residue.

Belongs to the peptidase S14 family. As to quaternary structure, fourteen ClpP subunits assemble into 2 heptameric rings which stack back to back to give a disk-like structure with a central cavity, resembling the structure of eukaryotic proteasomes.

It is found in the cytoplasm. It catalyses the reaction Hydrolysis of proteins to small peptides in the presence of ATP and magnesium. alpha-casein is the usual test substrate. In the absence of ATP, only oligopeptides shorter than five residues are hydrolyzed (such as succinyl-Leu-Tyr-|-NHMec, and Leu-Tyr-Leu-|-Tyr-Trp, in which cleavage of the -Tyr-|-Leu- and -Tyr-|-Trp bonds also occurs).. Functionally, cleaves peptides in various proteins in a process that requires ATP hydrolysis. Has a chymotrypsin-like activity. Plays a major role in the degradation of misfolded proteins. In Clostridium botulinum (strain Hall / ATCC 3502 / NCTC 13319 / Type A), this protein is ATP-dependent Clp protease proteolytic subunit.